The primary structure comprises 461 residues: Nucleobindin-1 (461 aa).

The signal sequence occupies residues 1–26 (MPPSGPRGTLLLLPLLLLLLLRAVLA). Residues 42-51 (TESPDTGLYY) are O-glycosylated at one site. At S86 the chain carries Phosphoserine; by FAM20C. T148 is subject to Phosphothreonine; by FAM20C. The stretch at 150 to 218 (EARDLELLIQ…QQRRHREHPK (69 aa)) forms a coiled coil. A DNA-binding region spans residues 172–218 (HHEEFKRYEMLKEHERRRYLESLGEEQRKEAERKLEEQQRRHREHPK). Residues 193–210 (SLGEEQRKEAERKLEEQQ) are compositionally biased toward basic and acidic residues. The tract at residues 193 to 221 (SLGEEQRKEAERKLEEQQRRHREHPKVNV) is disordered. The tract at residues 228–321 (LKEVWEELDG…VTLEEFLAST (94 aa)) is binds to GNAI2 and GNAI3. EF-hand domains lie at 240–275 (PNRF…ELEK) and 292–327 (ERLR…KEFG). Residues D253, N255, D257, E264, D305, N307, D309, and E316 each contribute to the Ca(2+) site. The GBA motif lies at 303–333 (NVDTNQDRLVTLEEFLASTQRKEFGDTGEGW). A coiled-coil region spans residues 341–407 (AYTEEELRRF…QRKQQQQQQQ (67 aa)). The tract at residues 368-461 (LSQETEALGR…LPEVEVPQHL (94 aa)) is disordered. Phosphoserine; by FAM20C is present on S369. A compositionally biased stretch (basic and acidic residues) spans 437–461 (DQKEVDTSEKKLLERLPEVEVPQHL).

This sequence belongs to the nucleobindin family. Interacts (via GBA motif) with guanine nucleotide-binding protein G(i) alpha subunits GNAI1, GNAI2 and GNAI3 with higher affinity for GNAI1 and GNAI3 than for GNAI2. Preferentially interacts with inactive rather than active GNAI3. Interaction with GNAI3 is inhibited when NUCB1 binds calcium, probably due to a conformational change which renders the GBA motif inaccessible. In terms of processing, O-glycosylated. Expressed both in fetal and adult heart, lung, liver, kidney and brain, and in adult skeletal muscle, placenta and pancreas.

Its subcellular location is the golgi apparatus. The protein resides in the cis-Golgi network membrane. The protein localises to the cytoplasm. It is found in the secreted. Functionally, major calcium-binding protein of the Golgi which may have a role in calcium homeostasis. Acts as a non-receptor guanine nucleotide exchange factor which binds to and activates alpha subunits of guanine nucleotide-binding proteins (G proteins). The polypeptide is Nucleobindin-1 (NUCB1) (Homo sapiens (Human)).